The following is a 204-amino-acid chain: AFG2-interacting ribosome maturation factor (204 aa).

In terms of assembly, part of the 55LCC heterohexameric ATPase complex. Does not associate with pre-60S ribosomal particles.

It is found in the nucleus. The protein localises to the cytoplasm. Its function is as follows. Part of the 55LCC heterohexameric ATPase complex which is chromatin-associated and promotes replisome proteostasis to maintain replication fork progression and genome stability. Required for replication fork progression, sister chromatid cohesion, and chromosome stability. The ATPase activity is specifically enhanced by replication fork DNA and is coupled to cysteine protease-dependent cleavage of replisome substrates in response to replication fork damage. Uses ATPase activity to process replisome substrates in S-phase, facilitating their proteolytic turnover from chromatin to ensure DNA replication and mitotic fidelity. Involved in the cytoplasmic maturation steps of pre-60S ribosomal particles by promoting the release of shuttling protein RSL24D1/RLP24 from the pre-ribosomal particles. The chain is AFG2-interacting ribosome maturation factor (airim) from Xenopus tropicalis (Western clawed frog).